The sequence spans 78 residues: Acyl carrier protein (78 aa).

The Carrier domain maps to 2–77 (SNIEQQVKKI…LAIDYINAHN (76 aa)). Position 37 is an O-(pantetheine 4'-phosphoryl)serine (S37).

This sequence belongs to the acyl carrier protein (ACP) family. In terms of processing, 4'-phosphopantetheine is transferred from CoA to a specific serine of apo-ACP by AcpS. This modification is essential for activity because fatty acids are bound in thioester linkage to the sulfhydryl of the prosthetic group.

It localises to the cytoplasm. It functions in the pathway lipid metabolism; fatty acid biosynthesis. Its function is as follows. Carrier of the growing fatty acid chain in fatty acid biosynthesis. This is Acyl carrier protein from Neisseria gonorrhoeae (strain ATCC 700825 / FA 1090).